Here is a 65-residue protein sequence, read N- to C-terminus: Large ribosomal subunit protein bL35c (65 aa).

This sequence belongs to the bacterial ribosomal protein bL35 family.

It localises to the plastid. The protein resides in the cyanelle. The protein is Large ribosomal subunit protein bL35c (rpl35) of Cyanophora paradoxa.